A 1002-amino-acid chain; its full sequence is BTB/POZ domain-containing protein At1g04390 (1002 aa).

BTB domains follow at residues 680 to 758 and 808 to 889; these read SDMR…EVES and SDVI…PKPP.

The protein operates within protein modification; protein ubiquitination. May act as a substrate-specific adapter of an E3 ubiquitin-protein ligase complex (CUL3-RBX1-BTB) which mediates the ubiquitination and subsequent proteasomal degradation of target proteins. The sequence is that of BTB/POZ domain-containing protein At1g04390 from Arabidopsis thaliana (Mouse-ear cress).